The primary structure comprises 479 residues: UDP-N-acetylmuramate--L-alanine ligase (479 aa).

Gly115–Thr121 serves as a coordination point for ATP.

This sequence belongs to the MurCDEF family.

The protein localises to the cytoplasm. The catalysed reaction is UDP-N-acetyl-alpha-D-muramate + L-alanine + ATP = UDP-N-acetyl-alpha-D-muramoyl-L-alanine + ADP + phosphate + H(+). It participates in cell wall biogenesis; peptidoglycan biosynthesis. Its function is as follows. Cell wall formation. This is UDP-N-acetylmuramate--L-alanine ligase from Acidiphilium cryptum (strain JF-5).